Reading from the N-terminus, the 118-residue chain is UPF0102 protein lpg2994 (118 aa).

The protein belongs to the UPF0102 family.

This is UPF0102 protein lpg2994 from Legionella pneumophila subsp. pneumophila (strain Philadelphia 1 / ATCC 33152 / DSM 7513).